A 456-amino-acid polypeptide reads, in one-letter code: Chromosomal replication initiator protein DnaA (456 aa).

Residues 1 to 83 are domain I, interacts with DnaA modulators; it reads MTASLWQQCL…LRFDIGNRPH (83 aa). Positions 83–119 are domain II; the sequence is HPVAIARAPARGAAPVNNLQKSWESKADAKPEPNHKS. A domain III, AAA+ region region spans residues 120–336; that stretch reads NTNVNYTFEN…GALNRVIANA (217 aa). ATP contacts are provided by glycine 164, glycine 166, lysine 167, and threonine 168. The domain IV, binds dsDNA stretch occupies residues 337–456; the sequence is NFTGRAINID…YSNLIRTLSS (120 aa).

Belongs to the DnaA family. Oligomerizes as a right-handed, spiral filament on DNA at oriC.

It localises to the cytoplasm. In terms of biological role, plays an essential role in the initiation and regulation of chromosomal replication. ATP-DnaA binds to the origin of replication (oriC) to initiate formation of the DNA replication initiation complex once per cell cycle. Binds the DnaA box (a 9 base pair repeat at the origin) and separates the double-stranded (ds)DNA. Forms a right-handed helical filament on oriC DNA; dsDNA binds to the exterior of the filament while single-stranded (ss)DNA is stabiized in the filament's interior. The ATP-DnaA-oriC complex binds and stabilizes one strand of the AT-rich DNA unwinding element (DUE), permitting loading of DNA polymerase. After initiation quickly degrades to an ADP-DnaA complex that is not apt for DNA replication. Binds acidic phospholipids. In Aeromonas salmonicida (strain A449), this protein is Chromosomal replication initiator protein DnaA.